The primary structure comprises 101 residues: ATP synthase subunit c (101 aa).

Helical transmembrane passes span 28–48 (SVVA…VGMG) and 72–92 (MFIA…IALI).

It belongs to the ATPase C chain family. In terms of assembly, F-type ATPases have 2 components, F(1) - the catalytic core - and F(0) - the membrane proton channel. F(1) has five subunits: alpha(3), beta(3), gamma(1), delta(1), epsilon(1). F(0) has three main subunits: a(1), b(2) and c(10-14). The alpha and beta chains form an alternating ring which encloses part of the gamma chain. F(1) is attached to F(0) by a central stalk formed by the gamma and epsilon chains, while a peripheral stalk is formed by the delta and b chains.

The protein resides in the cell inner membrane. In terms of biological role, f(1)F(0) ATP synthase produces ATP from ADP in the presence of a proton or sodium gradient. F-type ATPases consist of two structural domains, F(1) containing the extramembraneous catalytic core and F(0) containing the membrane proton channel, linked together by a central stalk and a peripheral stalk. During catalysis, ATP synthesis in the catalytic domain of F(1) is coupled via a rotary mechanism of the central stalk subunits to proton translocation. Functionally, key component of the F(0) channel; it plays a direct role in translocation across the membrane. A homomeric c-ring of between 10-14 subunits forms the central stalk rotor element with the F(1) delta and epsilon subunits. In Sulfurovum sp. (strain NBC37-1), this protein is ATP synthase subunit c.